Here is a 90-residue protein sequence, read N- to C-terminus: Bombyxin B-12 (90 aa).

Residues 1–20 (MMKTTIMFMLVVVISLTYSS) form the signal peptide. Intrachain disulfides connect Cys30–Cys76, Cys42–Cys89, and Cys75–Cys80. Residues 49–67 (SGAQYAPYFWTRQYLGSRG) constitute a propeptide, c peptide like.

The protein belongs to the insulin family. In terms of assembly, heterodimer of a B chain and an A chain linked by two disulfide bonds.

Its subcellular location is the secreted. Its function is as follows. Brain peptide responsible for activation of prothoracic glands to produce ecdysone in insects. The protein is Bombyxin B-12 (BBXB12) of Bombyx mori (Silk moth).